We begin with the raw amino-acid sequence, 123 residues long: Small ribosomal subunit protein uS12 (123 aa).

A 3-methylthioaspartic acid modification is found at Asp-89.

The protein belongs to the universal ribosomal protein uS12 family. In terms of assembly, part of the 30S ribosomal subunit. Contacts proteins S8 and S17. May interact with IF1 in the 30S initiation complex.

Its function is as follows. With S4 and S5 plays an important role in translational accuracy. In terms of biological role, interacts with and stabilizes bases of the 16S rRNA that are involved in tRNA selection in the A site and with the mRNA backbone. Located at the interface of the 30S and 50S subunits, it traverses the body of the 30S subunit contacting proteins on the other side and probably holding the rRNA structure together. The combined cluster of proteins S8, S12 and S17 appears to hold together the shoulder and platform of the 30S subunit. This chain is Small ribosomal subunit protein uS12, found in Methylobacterium sp. (strain 4-46).